A 471-amino-acid chain; its full sequence is Secretogranin-3 (471 aa).

Residues 1-22 form the signal peptide; it reads MGFLWTGSWILVLVLNSGPIQA. 3 disordered regions span residues 24–45, 89–108, and 345–404; these read PKPE…ERPL, TVEK…QLNV, and KLEK…TDEA. The segment covering 28 to 45 has biased composition (basic and acidic residues); the sequence is GSQDKSLHNRELSAERPL. Ser40 carries the phosphoserine modification. Ser40 carries O-linked (Xyl...) (chondroitin sulfate) serine glycosylation. 2 stretches are compositionally biased toward basic and acidic residues: residues 345–355 and 364–404; these read KLEKNTTDSKS and KSQE…TDEA. Ser365 bears the Phosphoserine mark.

Interacts with CHGA. Interacts with secretogranin II/SCG2. Interacts (via C-terminus) with CPE. Expressed in various brain areas, with highest levels in the arcuate nucleus and the lateral hypothalamic area, as well as the paraventricular nucleus and the ventromedial hypothalamus (at protein level).

The protein resides in the cytoplasmic vesicle. It is found in the secretory vesicle. The protein localises to the secretory vesicle membrane. Its subcellular location is the secreted. Functionally, member of the granin protein family that regulates the biogenesis of secretory granules. Acts as a sorting receptor for intragranular proteins including chromogranin A/CHGA. May also play a role in angiogenesis. Promotes endothelial proliferation, migration and tube formation through MEK/ERK signaling pathway. The chain is Secretogranin-3 (Scg3) from Mus musculus (Mouse).